Here is a 363-residue protein sequence, read N- to C-terminus: 3-dehydroquinate synthase (363 aa).

NAD(+) contacts are provided by residues 109–113 (GASTD), 133–134 (TT), lysine 146, and lysine 155. Residues glutamate 188, histidine 251, and histidine 267 each contribute to the Zn(2+) site.

Belongs to the sugar phosphate cyclases superfamily. Dehydroquinate synthase family. NAD(+) is required as a cofactor. The cofactor is Co(2+). Requires Zn(2+) as cofactor.

The protein localises to the cytoplasm. It catalyses the reaction 7-phospho-2-dehydro-3-deoxy-D-arabino-heptonate = 3-dehydroquinate + phosphate. It functions in the pathway metabolic intermediate biosynthesis; chorismate biosynthesis; chorismate from D-erythrose 4-phosphate and phosphoenolpyruvate: step 2/7. Catalyzes the conversion of 3-deoxy-D-arabino-heptulosonate 7-phosphate (DAHP) to dehydroquinate (DHQ). This Streptomyces coelicolor (strain ATCC BAA-471 / A3(2) / M145) protein is 3-dehydroquinate synthase.